The primary structure comprises 341 residues: Trimethylamine N-oxide transport system ATP-binding protein TmoW (341 aa).

Residues 6 to 265 (IKCESVYKIF…PATEYVRKFT (260 aa)) enclose the ABC transporter domain. 61-68 (GLSGSGKS) contacts ATP.

Belongs to the ABC transporter superfamily. As to quaternary structure, the complex is probably composed of two ATP-binding proteins (TmoW), two transmembrane proteins (TmoV) and a solute-binding protein (TmoX).

Its subcellular location is the cell inner membrane. It carries out the reaction a quaternary ammonium(out) + ATP + H2O = a quaternary ammonium(in) + ADP + phosphate + H(+). In terms of biological role, part of the ABC transporter complex TmoXWV involved in trimethylamine N-oxide (TMAO) import. Responsible for energy coupling to the transport system. This chain is Trimethylamine N-oxide transport system ATP-binding protein TmoW, found in Pelagibacter ubique (strain HTCC1062).